The chain runs to 183 residues: uncharacterized protein (183 aa).

Belongs to the EUO family.

This is an uncharacterized protein from Chlamydia trachomatis serovar D (strain ATCC VR-885 / DSM 19411 / UW-3/Cx).